The following is a 381-amino-acid chain: Cytochrome b (381 aa).

4 helical membrane passes run 31–51, 75–97, 112–132, and 178–198; these read FGFL…FLAM, WLLR…IHIF, VWVI…IGYV, and FFSL…VHLA. Residues histidine 81 and histidine 95 each coordinate heme b. Histidine 182 and histidine 196 together coordinate heme b. Histidine 201 serves as a coordination point for a ubiquinone. 4 helical membrane passes run 224 to 244, 288 to 308, 320 to 340, and 347 to 367; these read FIVK…IFVY, LGGV…PWIH, LYRL…WIGG, and YVII…ILLP.

This sequence belongs to the cytochrome b family. As to quaternary structure, the main subunits of complex b-c1 are: cytochrome b, cytochrome c1 and the Rieske protein. It depends on heme b as a cofactor.

The protein resides in the mitochondrion inner membrane. In terms of biological role, component of the ubiquinol-cytochrome c reductase complex (complex III or cytochrome b-c1 complex) that is part of the mitochondrial respiratory chain. The b-c1 complex mediates electron transfer from ubiquinol to cytochrome c. Contributes to the generation of a proton gradient across the mitochondrial membrane that is then used for ATP synthesis. The polypeptide is Cytochrome b (MT-CYB) (Chondrus crispus (Carrageen Irish moss)).